We begin with the raw amino-acid sequence, 102 residues long: Circadian clock oscillator protein KaiB (102 aa).

The protein belongs to the KaiB family. As to quaternary structure, undergoes a major conformational rearrangment; in the free state forms homotetramers with 2 dimers. When bound to the CI domain of KaiC switches to a monomeric thioredoxin-fold (KaiB(fs)). Monomers, homodimers and homotetramers are detected in solution; at low concentrations only monomers are seen. In vitro forms KaiC(6):KaiB(1) and KaiC(6):KaiB(6) complexes. Only associates with 'Ser-431'-phosphorylated KaiC (and not with doubly phosphorylated KaiC). Complex formation between KaiB and KaiC is regulated by the phosphorylation state of KaiC and by an ATP hydrolysis-driven conformation change in the CI ring of KaiC; complex formation is slow. Slow complex formation is crucial for the timing of the circadian period. In low resolution cryo-EM forms a KaiC(6):KaiB(6) complex. The KaiABC complex composition changes during the circadian cycle to control KaiC phosphorylation. Complexes KaiC(6), KaiA(2-4):KaiC(6), KaiB(6):KaiC(6) and KaiC(6):KaiB(6):KaiA(12) are among the most important forms, many form cooperatively. The KaiB:KaiC complex is more prevalent at 16 hours (in the dark) than at 4 hours (in the light) in the circadian cycle. The KaiA:KaiB complex is only found at 20-24 hours in the circadian cycle (subjective night). Binds to the CI domain of KaiC; SasA and KaiB compete to bind to the CI domain.

It localises to the cytoplasm. The protein resides in the cell membrane. Its function is as follows. Key component of the KaiABC oscillator complex, which constitutes the main circadian regulator in cyanobacteria. Complex composition changes during the circadian cycle to control KaiC phosphorylation. KaiA stimulates KaiC autophosphorylation, while KaiB sequesters KaiA, leading to KaiC autodephosphorylation. KaiA binding to the KaiC CII domain yields KaiA(2-4):KaiC(6) complexes which stimulate KaiC autophosphorylation. Phospho-Ser-431 KaiC accumulation triggers binding of KaiB to form the KaiB(6):KaiC(6) complex, leading to changes in the output regulators CikA and SasA. KaiB switches to a thioredoxin-like fold (KaiB(fs)) in complex with KaiC. KaiB(6):KaiC(6) formation exposes a site for KaiA binding that sequesters KaiA from the CII domain, making the KaiC(6):KaiB(6):KaiA(12) complex that results in KaiC autodephosphorylation. Complete dephosphorylation of KaiC leads to dissociation of KaiA(2):KaiB(1), completing 1 cycle of the Kai oscillator. Functionally, circadian oscillations can be generated in vitro by incubating KaiA, KaiB and KaiC with 1 mM ATP. The cycle is self-sustainable for at least 3 cycles and resistant to temperature changes. A very robust clock is reconstituted with KaiA, KaiB, KaiC, SasA, CikA and RpaA; output is measured by transcription from an appropriate reporter. In terms of biological role, a metamorphic protein which reversibly switches between an inactive tetrameric fold and a rare, thioredoxin-like monomeric fold (KaiB(fs)). KaiB(fs) binds phospho-KaiC, KaiA and CikA. KaiA and CikA compete for binding to KaiB(fs), and KaiB(fs) and SasA compete for binding to KaiC, thus the clock oscillator and output signal pathway are tightly coupled. This chain is Circadian clock oscillator protein KaiB, found in Synechococcus elongatus (strain ATCC 33912 / PCC 7942 / FACHB-805) (Anacystis nidulans R2).